We begin with the raw amino-acid sequence, 290 residues long: 4-hydroxybenzoate octaprenyltransferase (290 aa).

A run of 8 helical transmembrane segments spans residues 23–43, 46–66, 99–119, 141–161, 170–190, 213–233, 234–254, and 268–288; these read IGTLLLLWPTLWALWLAGKGV, LSILVVFVVGVFLMRAAGCVV, LFVVLVLVSFGLVLTLNAMTI, LPQFVLGAAFGWGIPMAYAAV, WLLLLANICWTVAYDTLYAMV, LIVGLLQFATLLLMLWVGYLT, QMSGAFYWSLLLAGALFIHQQ, and AFMDNNYVGLVLFIGIALSYW.

The protein belongs to the UbiA prenyltransferase family. Mg(2+) serves as cofactor.

The protein localises to the cell inner membrane. The catalysed reaction is all-trans-octaprenyl diphosphate + 4-hydroxybenzoate = 4-hydroxy-3-(all-trans-octaprenyl)benzoate + diphosphate. It participates in cofactor biosynthesis; ubiquinone biosynthesis. Functionally, catalyzes the prenylation of para-hydroxybenzoate (PHB) with an all-trans polyprenyl group. Mediates the second step in the final reaction sequence of ubiquinone-8 (UQ-8) biosynthesis, which is the condensation of the polyisoprenoid side chain with PHB, generating the first membrane-bound Q intermediate 3-octaprenyl-4-hydroxybenzoate. This is 4-hydroxybenzoate octaprenyltransferase from Serratia proteamaculans (strain 568).